Reading from the N-terminus, the 340-residue chain is Protein-arginine kinase (340 aa).

The region spanning Ile14–Ala241 is the Phosphagen kinase C-terminal domain. Residues Ser17–Arg21, Arg112, Arg163–Met167, and Arg194–Glu199 each bind ATP.

Belongs to the ATP:guanido phosphotransferase family.

The enzyme catalyses L-arginyl-[protein] + ATP = N(omega)-phospho-L-arginyl-[protein] + ADP + H(+). In terms of biological role, catalyzes the specific phosphorylation of arginine residues in proteins. This chain is Protein-arginine kinase, found in Clostridium tetani (strain Massachusetts / E88).